A 269-amino-acid chain; its full sequence is Phosphate import ATP-binding protein PstB 2 (269 aa).

The ABC transporter domain occupies 23–264 (LEVKDLSIYY…PKKQKTEDYI (242 aa)). ATP is bound at residue 55–62 (GPSGCGKS).

Belongs to the ABC transporter superfamily. Phosphate importer (TC 3.A.1.7) family. As to quaternary structure, the complex is composed of two ATP-binding proteins (PstB), two transmembrane proteins (PstC and PstA) and a solute-binding protein (PstS).

The protein localises to the cell membrane. The enzyme catalyses phosphate(out) + ATP + H2O = ADP + 2 phosphate(in) + H(+). Its function is as follows. Part of the ABC transporter complex PstSACB involved in phosphate import. Responsible for energy coupling to the transport system. The polypeptide is Phosphate import ATP-binding protein PstB 2 (Bacillus subtilis (strain 168)).